Consider the following 404-residue polypeptide: Cysteine desulfurase IscS (404 aa).

Residues 75 to 76 (AT), asparagine 155, glutamine 183, and 203 to 205 (SAH) each bind pyridoxal 5'-phosphate. Lysine 206 bears the N6-(pyridoxal phosphate)lysine mark. Residue threonine 243 participates in pyridoxal 5'-phosphate binding. Cysteine 328 serves as the catalytic Cysteine persulfide intermediate. Residue cysteine 328 coordinates [2Fe-2S] cluster.

It belongs to the class-V pyridoxal-phosphate-dependent aminotransferase family. NifS/IscS subfamily. In terms of assembly, homodimer. Forms a heterotetramer with IscU, interacts with other sulfur acceptors. It depends on pyridoxal 5'-phosphate as a cofactor.

It is found in the cytoplasm. The enzyme catalyses (sulfur carrier)-H + L-cysteine = (sulfur carrier)-SH + L-alanine. It participates in cofactor biosynthesis; iron-sulfur cluster biosynthesis. Master enzyme that delivers sulfur to a number of partners involved in Fe-S cluster assembly, tRNA modification or cofactor biosynthesis. Catalyzes the removal of elemental sulfur atoms from cysteine to produce alanine. Functions as a sulfur delivery protein for Fe-S cluster synthesis onto IscU, an Fe-S scaffold assembly protein, as well as other S acceptor proteins. The polypeptide is Cysteine desulfurase IscS (Vibrio cholerae serotype O1 (strain ATCC 39541 / Classical Ogawa 395 / O395)).